We begin with the raw amino-acid sequence, 1034 residues long: Beta-galactosidase (1034 aa).

Asn108 and Asp207 together coordinate substrate. Residue Asp207 coordinates Na(+). The Mg(2+) site is built by Glu423, His425, and Glu468. Substrate is bound by residues Glu468 and 544-547; that span reads EYAH. Glu468 serves as the catalytic Proton donor. Catalysis depends on Glu544, which acts as the Nucleophile. Position 604 (Asn604) interacts with Mg(2+). Na(+) contacts are provided by Phe608 and Asn611. Positions 611 and 1010 each coordinate substrate.

It belongs to the glycosyl hydrolase 2 family. Homotetramer. Mg(2+) serves as cofactor. It depends on Na(+) as a cofactor.

It carries out the reaction Hydrolysis of terminal non-reducing beta-D-galactose residues in beta-D-galactosides.. This Klebsiella pneumoniae protein is Beta-galactosidase.